The sequence spans 23 residues: Paralytic peptide 1 (23 aa).

The cysteines at positions 7 and 19 are disulfide-linked.

The protein belongs to the GBP/PSP1/paralytic peptide family. In terms of tissue distribution, hemolymph.

Causes rapid, rigid paralysis when injected into Lepidopteran larvae. The physiological role may be to reduce hemolymph loss following injury and promote wound healing. This is Paralytic peptide 1 from Manduca sexta (Tobacco hawkmoth).